The sequence spans 464 residues: Protein FAM90A14 (464 aa).

Disordered regions lie at residues 1-42, 70-389, and 411-437; these read MMAR…DPRL, PATL…HDGA, and APSFHSPEKPGAFLAQSPHVSEKSEAP. Composition is skewed to basic and acidic residues over residues 74–89 and 97–114; these read GKKEGKENLKPWKPRV and NKDKGEKEERPRQQDPQR. Residues 180–197 show a composition bias toward low complexity; that stretch reads LASLSPLRKASLSSSSSL.

It belongs to the FAM90 family.

The protein is Protein FAM90A14 of Homo sapiens (Human).